The chain runs to 332 residues: Anthranilate phosphoribosyltransferase (332 aa).

Residues G78, 81 to 82, S86, 88 to 91, 106 to 114, and S118 each bind 5-phospho-alpha-D-ribose 1-diphosphate; these read GD, NIST, and KHGNKSITS. G78 provides a ligand contact to anthranilate. A Mg(2+)-binding site is contributed by S90. N109 contributes to the anthranilate binding site. Residue R163 participates in anthranilate binding. Mg(2+)-binding residues include D222 and E223.

This sequence belongs to the anthranilate phosphoribosyltransferase family. As to quaternary structure, homodimer. Mg(2+) is required as a cofactor.

The enzyme catalyses N-(5-phospho-beta-D-ribosyl)anthranilate + diphosphate = 5-phospho-alpha-D-ribose 1-diphosphate + anthranilate. It participates in amino-acid biosynthesis; L-tryptophan biosynthesis; L-tryptophan from chorismate: step 2/5. Its function is as follows. Catalyzes the transfer of the phosphoribosyl group of 5-phosphorylribose-1-pyrophosphate (PRPP) to anthranilate to yield N-(5'-phosphoribosyl)-anthranilate (PRA). This is Anthranilate phosphoribosyltransferase from Staphylococcus aureus (strain Mu3 / ATCC 700698).